Reading from the N-terminus, the 513-residue chain is MQLNPSEISELIKSRISELGVDSQVRNEGTVISVTDGICRVHGLSGVMQGEMLEFPNNTIGLALNLERDSVGAVVLGEYTHIKEGDPVKCTGRILEVPVGPELLGRVVSVLGQPIDGKGPINTKLTDFIEKVAPGVIARQSVSQPVQTGLKAIDAMVPIGRGQRELIIGDRQTGKTAVAVDAIINQKGKGVYCVYVAIGQKASTIANVVRKLTENGAIDYTIVVAASASESAAMQYLSAYAGCTMGEYFRDRGEDALIVYDDLTKQAVAYRQISLLLRRPPGREAYPGDVFYLHSRLLERAARVNAEYVEKFTNGAVKGKTGSLTALPIIETQAGDVSAFVPTNVISITDGQIFLETDLFNAGVRPAINAGISVSRVGGTAQTKVIKKLSGGIRTDLAQYRELAAFAQFASDLDEATRKQLERGRRVTELCKQAQYKPLQVWEMAASLYAVNNGFFDDLEVKNVLAFEKGLQDHLKSKYADLVARIEATKDLSKDDEAALRAAVEDYKRSASF.

Residue 169-176 (GDRQTGKT) coordinates ATP.

This sequence belongs to the ATPase alpha/beta chains family. As to quaternary structure, F-type ATPases have 2 components, CF(1) - the catalytic core - and CF(0) - the membrane proton channel. CF(1) has five subunits: alpha(3), beta(3), gamma(1), delta(1), epsilon(1). CF(0) has three main subunits: a(1), b(2) and c(9-12). The alpha and beta chains form an alternating ring which encloses part of the gamma chain. CF(1) is attached to CF(0) by a central stalk formed by the gamma and epsilon chains, while a peripheral stalk is formed by the delta and b chains.

The protein localises to the cell inner membrane. It carries out the reaction ATP + H2O + 4 H(+)(in) = ADP + phosphate + 5 H(+)(out). Produces ATP from ADP in the presence of a proton gradient across the membrane. The alpha chain is a regulatory subunit. The sequence is that of ATP synthase subunit alpha from Polynucleobacter necessarius subsp. necessarius (strain STIR1).